The following is a 326-amino-acid chain: WRKY transcription factor 8 (326 aa).

Residues 115-172 (VRVSASPSSSEADHHPGEDSGKIRKKREVRDGGEDDQRSQKVVKTKKKEEKKKEPRVS) form a disordered region. Basic and acidic residues-rich tracts occupy residues 125–153 (EADH…DQRS) and 161–170 (KKEEKKKEPR). The WRKY DNA-binding region spans 177–242 (TEVDHLEDGY…YESQHNHPIP (66 aa)).

Belongs to the WRKY group II-c family. As to quaternary structure, interacts with VQ9 (via N-terminus). In terms of tissue distribution, highly expressed in roots and at lower levels in rosette leaves, cauline leaves, stems, flowers and siliques.

The protein localises to the nucleus. Transcription factor. Interacts specifically with the W box (5'-TTGAC[CT]-3'), a frequently occurring stress-responsive cis-acting element. Functions as a positive regulator of salt stress response. Binds the W box of LTI78/RD29A stress-response gene and directly regulates its transcription under salt stress. Functions antagonistically with VQ9 to regulate sodium and potassium homeostasis under salt stress by regulating the expression of downstream SOS (SALT OVERLY SENSITIVE) stress-responsive genes. The DNA-binding activity of WRKY8 is decreased by VQ9. Functions as a negative regulator of basal resistance to the bacterial pathogen P.syringae and as positive regulator of resistance to the fungal pathogen to B.cinerea. Functions as a positive regulator of defense response againt tobamovirus (TMV) by regulating both the abscisic acid and ethylene signaling pathways. Positively regulates ABI4 expression and negatively modulates ACS6 and ERF104 expression by directly binding to the W box consensus motifs within their promoters. The polypeptide is WRKY transcription factor 8 (WRKY8) (Arabidopsis thaliana (Mouse-ear cress)).